The following is a 179-amino-acid chain: Large ribosomal subunit protein uL5 (179 aa).

This sequence belongs to the universal ribosomal protein uL5 family. As to quaternary structure, part of the 50S ribosomal subunit; part of the 5S rRNA/L5/L18/L25 subcomplex. Contacts the 5S rRNA and the P site tRNA. Forms a bridge to the 30S subunit in the 70S ribosome.

Functionally, this is one of the proteins that bind and probably mediate the attachment of the 5S RNA into the large ribosomal subunit, where it forms part of the central protuberance. In the 70S ribosome it contacts protein S13 of the 30S subunit (bridge B1b), connecting the 2 subunits; this bridge is implicated in subunit movement. Contacts the P site tRNA; the 5S rRNA and some of its associated proteins might help stabilize positioning of ribosome-bound tRNAs. The chain is Large ribosomal subunit protein uL5 from Geotalea uraniireducens (strain Rf4) (Geobacter uraniireducens).